A 379-amino-acid chain; its full sequence is Carboxypeptidase Y-deficient protein 8 (379 aa).

Residues 84 to 107 (HGSGNSSSKKVTSSTSSSSSNGSV) show a composition bias toward low complexity. The disordered stretch occupies residues 84–108 (HGSGNSSSKKVTSSTSSSSSNGSVD). Ser216 is modified (phosphoserine).

It belongs to the VPS26 family. As to quaternary structure, component of the retromer complex which consists of VPS29, VPS26, VPS35, VPS5 and VPS17. Component of a retromer subcomplex consisting of VPS29, VPS26 and VPS35.

In terms of biological role, plays a role in vesicular protein sorting. Required for the endosome-to-Golgi retrieval of the vacuolar protein sorting receptor VPS10. Component of the membrane-associated retromer complex which is essential in endosome-to-Golgi retrograde transport. The VPS29-VPS26-VPS35 subcomplex may be involved in cargo selection. The sequence is that of Carboxypeptidase Y-deficient protein 8 (PEP8) from Saccharomyces cerevisiae (strain ATCC 204508 / S288c) (Baker's yeast).